The primary structure comprises 133 residues: DNA-directed RNA polymerases I and III subunit RPAC2 (133 aa).

Met-1 is modified (N-acetylmethionine).

This sequence belongs to the archaeal Rpo11/eukaryotic RPB11/RPC19 RNA polymerase subunit family. In terms of assembly, component of the RNA polymerase I and RNA polymerase III complexes consisting of at least 13 and 17 subunits, respectively. Pol I complex consists of a ten-subunit catalytic core composed of POLR1A/RPA1, POLR1B/RPA2, POLR1C/RPAC1, POLR1D/RPAC2, POLR1H/RPA12, POLR2E/RPABC1, POLR2F/RPABC2, POLR2H/RPABC3, POLR2K/RPABC4 and POLR2L/RPABC5; a mobile stalk subunit POLR1F/RPA43 protruding from the core and additional subunits homologous to general transcription factors POLR1E/RPA49 and POLR1G/RPA34. Part of Pol I pre-initiation complex (PIC), in which Pol I core assembles with RRN3 and promoter-bound UTBF and SL1/TIF-IB complex. Pol III complex consists of a ten-subunit catalytic core composed of POLR3A/RPC1, POLR3B/RPC2, POLR1C/RPAC1, POLR1D/RPAC2, POLR3K/RPC10, POLR2E/RPABC1, POLR2F/RPABC2, POLR2H/RPABC3, POLR2K/RPABC4 and POLR2L/RPABC5; a mobile stalk composed of two subunits POLR3H/RPC8 and CRCP/RPC9, protruding from the core and functioning primarily in transcription initiation; and additional subunits homologous to general transcription factors of the RNA polymerase II machinery, POLR3C/RPC3-POLR3F/RPC6-POLR3G/RPC7 heterotrimer required for transcription initiation and POLR3D/RPC4-POLR3E/RPC5 heterodimer involved in both transcription initiation and termination.

It is found in the nucleus. The protein localises to the nucleolus. DNA-dependent RNA polymerase catalyzes the transcription of DNA into RNA using the four ribonucleoside triphosphates as substrates. Common component of RNA polymerases I and III which synthesize ribosomal RNA precursors and short non-coding RNAs including 5S rRNA, snRNAs, tRNAs and miRNAs, respectively. The chain is DNA-directed RNA polymerases I and III subunit RPAC2 from Homo sapiens (Human).